Here is a 362-residue protein sequence, read N- to C-terminus: Chorismate synthase (362 aa).

NADP(+) is bound at residue R47. FMN-binding positions include 124–126, G286, 301–305, and R327; these read RSS and KPTAT.

The protein belongs to the chorismate synthase family. Homotetramer. The cofactor is FMNH2.

The catalysed reaction is 5-O-(1-carboxyvinyl)-3-phosphoshikimate = chorismate + phosphate. It functions in the pathway metabolic intermediate biosynthesis; chorismate biosynthesis; chorismate from D-erythrose 4-phosphate and phosphoenolpyruvate: step 7/7. Functionally, catalyzes the anti-1,4-elimination of the C-3 phosphate and the C-6 proR hydrogen from 5-enolpyruvylshikimate-3-phosphate (EPSP) to yield chorismate, which is the branch point compound that serves as the starting substrate for the three terminal pathways of aromatic amino acid biosynthesis. This reaction introduces a second double bond into the aromatic ring system. The chain is Chorismate synthase from Trichormus variabilis (strain ATCC 29413 / PCC 7937) (Anabaena variabilis).